We begin with the raw amino-acid sequence, 418 residues long: Aspartate aminotransferase 1 (418 aa).

K264 bears the N6-(pyridoxal phosphate)lysine mark.

It belongs to the class-I pyridoxal-phosphate-dependent aminotransferase family. Homodimer. Requires pyridoxal 5'-phosphate as cofactor. As to expression, nodules, roots, stems and leaves, in decreasing order of aspartate aminotransferase 1 concentration. Is the predominant aspartate aminotransferase isoenzyme in roots.

The protein localises to the cytoplasm. The enzyme catalyses L-aspartate + 2-oxoglutarate = oxaloacetate + L-glutamate. Its function is as follows. Important for the metabolism of amino acids and Krebs-cycle related organic acids. In plants, it is involved in nitrogen metabolism and in aspects of carbon and energy metabolism. The chain is Aspartate aminotransferase 1 (AAT-1) from Medicago sativa (Alfalfa).